Reading from the N-terminus, the 340-residue chain is Anthranilate phosphoribosyltransferase (340 aa).

Residues Gly80, 83 to 84, Thr88, 90 to 93, 108 to 116, and Ser120 contribute to the 5-phospho-alpha-D-ribose 1-diphosphate site; these read GD, NIST, and KHGNRAMSS. Gly80 serves as a coordination point for anthranilate. Ser92 contributes to the Mg(2+) binding site. Asn111 provides a ligand contact to anthranilate. Arg166 provides a ligand contact to anthranilate. 2 residues coordinate Mg(2+): Asp225 and Glu226.

This sequence belongs to the anthranilate phosphoribosyltransferase family. As to quaternary structure, homodimer. Requires Mg(2+) as cofactor.

The catalysed reaction is N-(5-phospho-beta-D-ribosyl)anthranilate + diphosphate = 5-phospho-alpha-D-ribose 1-diphosphate + anthranilate. It functions in the pathway amino-acid biosynthesis; L-tryptophan biosynthesis; L-tryptophan from chorismate: step 2/5. In terms of biological role, catalyzes the transfer of the phosphoribosyl group of 5-phosphorylribose-1-pyrophosphate (PRPP) to anthranilate to yield N-(5'-phosphoribosyl)-anthranilate (PRA). The sequence is that of Anthranilate phosphoribosyltransferase from Roseiflexus castenholzii (strain DSM 13941 / HLO8).